A 301-amino-acid chain; its full sequence is Prestalk A differentiation protein A (301 aa).

It belongs to the NmrA-type oxidoreductase family.

Functionally, involved in development and cell differentiation. The sequence is that of Prestalk A differentiation protein A (padA) from Dictyostelium discoideum (Social amoeba).